The primary structure comprises 340 residues: Protein HP_1247 (340 aa).

As to quaternary structure, seems to interact with H.pylori HolB.

Its function is as follows. Could be the functional equivalent of DNA polymerase III delta subunit (HolA). This chain is Protein HP_1247, found in Helicobacter pylori (strain ATCC 700392 / 26695) (Campylobacter pylori).